The sequence spans 765 residues: NADPH oxidase 5 (765 aa).

Residues 1-77 (MNTSGDPAQT…LFDSDRSGTI (77 aa)) form an N-terminal lobe of N-terminal regulatory EF domain region. The segment at 1-161 (MNTSGDPAQT…SCLRESAISL (161 aa)) is N-terminal regulatory EF domain. The Cytoplasmic segment spans residues 1–238 (MNTSGDPAQT…RAYWHNHRSQ (238 aa)). EF-hand domains lie at 26 to 56 (RWLR…ALHV) and 57 to 92 (KESF…LIHG). Residues D42, E44, E49, D70, D72, S74, T76, E81, and D106 each contribute to the Ca(2+) site. Residues 78-161 (TLQELQEALT…SCLRESAISL (84 aa)) are C-terminal lobe of N-terminal regulatory EF domain. Residues 93-156 (SPMDKLKFLF…RTVLQSCLRE (64 aa)) form the EF-hand 3; atypical; contains an insert of 28 residues domain. I107 carries the post-translational modification S-nitrosocysteine. The Ca(2+) site is built by D108, S138, S140, E145, D178, D180, N182, and E189. The interval 122–141 (GAGAGPHWASSPLGTGSGSI) is disordered. One can recognise an EF-hand 4 domain in the interval 165–200 (KLDQLTLALFESADADGNGAITFEELRDELQRFPGV). Residues 239–259 (LFCLATYAGLHVLLFGLAASA) traverse the membrane as a helical segment. A246 is modified (S-nitrosocysteine). At 260–266 (HRDLGAS) the chain is on the extracellular side. A helical membrane pass occupies residues 267-289 (VMVAKGCGQCLNFDCSFIAVLML). Over 290-317 (RRCLTWLRATWLAQVLPLDQNIQFHQLM) the chain is Cytoplasmic. Residues 293–440 (LTWLRATWLA…FLEKAIGLAV (148 aa)) enclose the Ferric oxidoreductase domain. A helical membrane pass occupies residues 318–338 (GYVVVGLSLVHTVAHTVNFVL). Residues 339 to 362 (QAQAEASPFQFWELLLTTRPGIGW) are Extracellular-facing. A helical membrane pass occupies residues 363 to 383 (VHGSASPTGVALLLLLLLMFI). The Cytoplasmic portion of the chain corresponds to 384–394 (CSSSCIRRSGH). A helical transmembrane segment spans residues 395-417 (FEVFYWTHLSYLLVWLLLIFHGP). 2 C-terminal catalytic dehydrogenase domain regions span residues 398 to 719 (FYWT…GRPD) and 416 to 737 (GPNF…KVQV). At 418–434 (NFWKWLLVPGILFFLEK) the chain is on the extracellular side. The helical transmembrane segment at 435 to 455 (AIGLAVSRMAAVCIMEVNLLP) threads the bilayer. The region spanning 441–577 (SRMAAVCIME…DGPYGTPTRR (137 aa)) is the FAD-binding FR-type domain. The Cytoplasmic portion of the chain corresponds to 456 to 583 (SKVTHLLIKR…PTRRIFASEH (128 aa)). Position 475 is a phosphoserine; by CaMK2 (D475). Position 490 is a phosphothreonine; by PKC/PRKCA (H490). The residue at position 494 (I494) is a Phosphothreonine; by CaMK2 and PKC/PRKCA. P498 bears the Phosphoserine; by CaMK2 and PKC/PRKCA mark. D502 is modified (phosphoserine; by CaMK2). An S-nitrosocysteine modification is found at Y519. The helical transmembrane segment at 584–604 (AVLIGAGIGITPFASILQSIM) threads the bilayer. Topologically, residues 605-765 (YRHQKRKHTC…FGFRFFQENF (161 aa)) are extracellular. Residue D659 is modified to Phosphoserine; by CaMK2. The residue at position 694 (L694) is an S-nitrosocysteine.

As to quaternary structure, homooligomer. The cofactor is FAD. It depends on Mg(2+) as a cofactor. Phosphorylation at Ser-475 by CaMK2 and at Ser-490, Thr-494 and Ser-498 by PKC/PRKCA positively regulates its catalytic activity. In terms of processing, S-nitrosylation in response to nitric oxide inhibits its catalytic activity. Mainly expressed in pachytene spermatocytes of testis and in lymphocyte-rich areas of spleen and lymph nodes. Also detected in ovary, placenta, pancreas, cardiac fibroblasts. Expressed in B-cells and prostate malignant cells. In terms of tissue distribution, expressed in spleen. Expressed in endothelial cells, pulmonary artery smooth muscle cells and epithelial colorectal adenocarcinoma cells. As to expression, expressed in microvascular endothelial cells (at protein level). Expressed in testis. Expressed in endothelial cells and pulmonary artery smooth muscle cells. Expressed in pulmonary artery smooth muscle cells and epithelial colorectal adenocarcinoma cells. In terms of tissue distribution, expressed in endothelial cells and pulmonary artery smooth muscle cells. As to expression, expressed in microvascular endothelial cells (at protein level).

It is found in the endoplasmic reticulum. It localises to the cell membrane. The enzyme catalyses NADPH + 2 O2 = 2 superoxide + NADP(+) + H(+). Its activity is regulated as follows. Activated by calcium which induces conformational changes and interaction between the N-terminal regulatory region and the C-terminal catalytic region. Inhibited by diphenylene iodonium. Calcium-dependent NADPH oxidase that catalyzes the generation of superoxide from molecular oxygen utilizing NADPH as an electron donor. May play a role in cell growth and apoptosis. Its function is as follows. Calcium-dependent NADPH oxidase that catalyzes the generation of superoxide from molecular oxygen utilizing NADPH as an electron donor. Involved in endothelial generation of reactive oxygen species (ROS), proliferation and angiogenesis and contributes to endothelial response to thrombin. Regulates redox-dependent processes in lymphocytes and spermatozoa. Functionally, calcium-dependent NADPH oxidase that catalyzes the generation of superoxide from molecular oxygen utilizing NADPH as an electron donor. In terms of biological role, this isoform lacks calcium-binding domains and was showed to present a NADPH oxidase activity in a calcium-independent manner. May be involved in endothelial generation of reactive oxygen species (ROS), proliferation and angiogenesis and contribute to endothelial response to thrombin. However another study showed an absence of oxidase activity. Subject to rapid degradation. Lacks calcium-dependent NADPH oxidase activity. The sequence is that of NADPH oxidase 5 from Homo sapiens (Human).